Reading from the N-terminus, the 225-residue chain is Plasma membrane-associated cation-binding protein 1 (225 aa).

G2 carries N-myristoyl glycine lipidation. T32 carries the post-translational modification Phosphothreonine. At S107 the chain carries Phosphoserine. The segment covering 140 to 197 (PVEEVKAEEPAKTEEPAKTEGTSGEKEEIVEETKKGETPETAVVEEKKPEVEEKKEEA) has biased composition (basic and acidic residues). Residues 140–225 (PVEEVKAEEP…TAPVAEPPKP (86 aa)) are disordered. Residues T152 and T177 each carry the phosphothreonine modification.

Belongs to the DREPP family. In terms of assembly, interacts with Turnip mosaic virus (TuMV) P3N-PIPO. Requires Cu(2+) as cofactor. Mostly expressed in the basal region of hypocotyls. Expressed in seedlings, roots, shoots, stems, leaves (e.g. in epidermis and vascular tissues), flowers (e.g. in pistils and anthers) and siliques (at protein level).

It is found in the cell membrane. The protein resides in the cytoplasm. Its subcellular location is the cytoskeleton. It localises to the cell junction. The protein localises to the plasmodesma. In terms of biological role, may be involved in intracellular signaling through interaction with PtdInsPs and calmodulin (CaM); may keep PtdInsPs attached to the plasma membrane until Ca(2+)-CaM reaches a competitive concentration subsequent to an increase triggered by a stimulus, thus leading to PtdInsPs release and subsequent activation of InsPs-dependent signaling cascade. Interacts competitively at the N-terminus with calcium ions and CaM (in a calcium-dependent manner), and with the phosphatidylinositol phosphates PtdIns(3,4,5)P(3), PtdIns(3,4)P(2), PtdIns(4,5)P(2) and PtdIns(3,5)P(2). Also binds weakly to PtdIns(3)P, PtdIns(4)P and PtdIns(5)P. Negative regulator of hypocotyl cell elongation by destabilizing cortical microtubules in a calcium-dependent manner. Binds directly to and destabilized microtubules to enhance microtubule depolymerization when cytoplasmic calcium increases. In case of Turnip mosaic virus (TuMV) infection, confers sensitivity by promoting viral cell-to-cell movement through interaction with viral P3N-PIPO. This is Plasma membrane-associated cation-binding protein 1 (PCAP1) from Arabidopsis thaliana (Mouse-ear cress).